The chain runs to 350 residues: Phosphate acyltransferase (350 aa).

This sequence belongs to the PlsX family. In terms of assembly, homodimer. Probably interacts with PlsY.

The protein resides in the cytoplasm. The catalysed reaction is a fatty acyl-[ACP] + phosphate = an acyl phosphate + holo-[ACP]. It participates in lipid metabolism; phospholipid metabolism. Its function is as follows. Catalyzes the reversible formation of acyl-phosphate (acyl-PO(4)) from acyl-[acyl-carrier-protein] (acyl-ACP). This enzyme utilizes acyl-ACP as fatty acyl donor, but not acyl-CoA. The sequence is that of Phosphate acyltransferase from Phenylobacterium zucineum (strain HLK1).